A 95-amino-acid polypeptide reads, in one-letter code: Histone-like DNA-binding protein (95 aa).

It belongs to the bacterial histone-like protein family.

This chain is Histone-like DNA-binding protein, found in Rickettsia rickettsii.